We begin with the raw amino-acid sequence, 129 residues long: Flagellar assembly factor FliW 2 (129 aa).

The protein belongs to the FliW family. In terms of assembly, interacts with translational regulator CsrA and flagellin(s).

The protein resides in the cytoplasm. Its function is as follows. Acts as an anti-CsrA protein, binds CsrA and prevents it from repressing translation of its target genes, one of which is flagellin. Binds to flagellin and participates in the assembly of the flagellum. The chain is Flagellar assembly factor FliW 2 from Helicobacter pylori (strain HPAG1).